The sequence spans 539 residues: Protein lin-14 (539 aa).

Disordered regions lie at residues proline 162–serine 230 and glutamate 262–proline 293. 2 stretches are compositionally biased toward polar residues: residues threonine 163–aspartate 183 and serine 193–isoleucine 214. Low complexity predominate over residues asparagine 274 to glycine 284. Positions aspartate 296–threonine 440 are involved in sequence-specific DNA-binding.

In terms of processing, cleaved by caspase ced-3 in vitro. As to expression, high levels in hypodermal, intestinal, body wall muscle, nerve ring, and ventral nerve cord cells of embryos and L1 animals.

The protein localises to the nucleus. In terms of biological role, heterochronic protein which controls the choice of stage specific cell fates. Involved in the temporal progression of vulval fate patterning, possibly by inhibiting lin-12. Acts as a transcription factor involved in the stage-specific repression of various genes, including insulin/insulin-like growth factor gene ins-33 and neuropeptide-encoding gene nlp-45. Binds to the consensus sequence 5'-[CT]GGA[AG]-3' in the regulatory elements of target genes. Plays a role in governing the developmental timing of male tail tip morphogenesis. Plays a role in controlling the timing of seam cell development during the larval stages. Plays a role in promoting survival at high temperatures in larvae. Involved in maintenance of the architecture of the ventral nerve cord, perhaps acting via modulating expression of the immunoglobulin domain gene zig-4. Functionally, may specify L2 and later cell fates, creating a temporal switch. Its function is as follows. May be involved in specifying L1 cell fates. This is Protein lin-14 from Caenorhabditis elegans.